The chain runs to 2100 residues: Autophagy-related protein 2 (2100 aa).

Disordered stretches follow at residues 101–129 (LPDK…HSVL), 288–363 (STVH…DSDD), 410–492 (IFPK…AVSQ), 512–588 (MSAM…HNSP), 674–694 (LPIS…GLND), 1474–1499 (PSHG…SASA), and 1969–1996 (DFLN…VDEG). The segment covering 300-320 (RPRSPQPSSSGSDSCGDMSRS) has biased composition (low complexity). A compositionally biased stretch (basic and acidic residues) spans 335–346 (VDSHGDESRHLE). The segment covering 462–485 (DSATSARGKTPDCQTEQESPSTSK) has biased composition (polar residues). The span at 512–522 (MSAMSQSSTTS) shows a compositional bias: low complexity. 2 stretches are compositionally biased toward basic and acidic residues: residues 535–546 (KRIDTSDPDQKE) and 555–565 (TEAKGASHDFD). The span at 1973–1985 (SPRGSPSRPSTSD) shows a compositional bias: low complexity. Over residues 1986–1996 (GRWDDNGVDEG) the composition is skewed to basic and acidic residues.

This sequence belongs to the ATG2 family.

The protein localises to the preautophagosomal structure membrane. The protein resides in the endoplasmic reticulum membrane. It catalyses the reaction a 1,2-diacyl-sn-glycero-3-phosphocholine(in) = a 1,2-diacyl-sn-glycero-3-phosphocholine(out). The enzyme catalyses a 1,2-diacyl-sn-glycero-3-phospho-L-serine(in) = a 1,2-diacyl-sn-glycero-3-phospho-L-serine(out). It carries out the reaction a 1,2-diacyl-sn-glycero-3-phosphoethanolamine(in) = a 1,2-diacyl-sn-glycero-3-phosphoethanolamine(out). In terms of biological role, lipid transfer protein required for autophagosome completion and peroxisome degradation. Tethers the edge of the isolation membrane (IM) to the endoplasmic reticulum (ER) and mediates direct lipid transfer from ER to IM for IM expansion. ATG2 binds to the ER exit site (ERES), which is the membrane source for autophagosome formation, using basic residues in its N-terminal region (NR) and to the expanding edge of the IM through its C-terminal region. The latter binding is assisted by an ATG18-PtdIns3P interaction. ATG2 then extracts phospholipids from the membrane source using its NR and transfers them to ATG9 to the IM through its predicted beta-sheet-rich structure for membrane expansion. This chain is Autophagy-related protein 2 (ATG2), found in Coccidioides immitis (strain RS) (Valley fever fungus).